A 308-amino-acid chain; its full sequence is NAD-dependent protein deacylase SIR4 (308 aa).

The transit peptide at 1-16 (MAATKLHPALRNAIRA) directs the protein to the mitochondrion. A Deacetylase sirtuin-type domain is found at 28 to 308 (TFDVQEGIKL…EVLPAALRQL (281 aa)). NAD(+) is bound by residues 53–73 (GAGI…RPPH) and 129–132 (QNVD). His147 acts as the Proton acceptor in catalysis. Zn(2+) contacts are provided by Cys155, Cys158, Cys211, and Cys214. Residues 251–253 (GTS), 277–279 (NSG), and Ile297 contribute to the NAD(+) site.

It belongs to the sirtuin family. Class II subfamily. Zn(2+) serves as cofactor.

The protein localises to the mitochondrion matrix. The catalysed reaction is N(6)-acetyl-L-lysyl-[protein] + NAD(+) + H2O = 2''-O-acetyl-ADP-D-ribose + nicotinamide + L-lysyl-[protein]. Functionally, NAD-dependent protein deacylase. Catalyzes the NAD-dependent hydrolysis of acyl groups from lysine residues. In Monosiga brevicollis (Choanoflagellate), this protein is NAD-dependent protein deacylase SIR4.